A 440-amino-acid polypeptide reads, in one-letter code: L-seryl-tRNA(Sec) selenium transferase (440 aa).

Position 282 is an N6-(pyridoxal phosphate)lysine (K282).

Belongs to the SelA family. The cofactor is pyridoxal 5'-phosphate.

The protein resides in the cytoplasm. It catalyses the reaction L-seryl-tRNA(Sec) + selenophosphate + H(+) = L-selenocysteinyl-tRNA(Sec) + phosphate. It functions in the pathway aminoacyl-tRNA biosynthesis; selenocysteinyl-tRNA(Sec) biosynthesis; selenocysteinyl-tRNA(Sec) from L-seryl-tRNA(Sec) (bacterial route): step 1/1. Its function is as follows. Converts seryl-tRNA(Sec) to selenocysteinyl-tRNA(Sec) required for selenoprotein biosynthesis. The protein is L-seryl-tRNA(Sec) selenium transferase of Campylobacter jejuni subsp. doylei (strain ATCC BAA-1458 / RM4099 / 269.97).